Consider the following 189-residue polypeptide: NADH-quinone oxidoreductase subunit B (189 aa).

[4Fe-4S] cluster-binding residues include C39, C40, C104, and C135.

This sequence belongs to the complex I 20 kDa subunit family. In terms of assembly, NDH-1 is composed of 14 different subunits. Subunits NuoB, C, D, E, F, and G constitute the peripheral sector of the complex. It depends on [4Fe-4S] cluster as a cofactor.

It localises to the cell inner membrane. It catalyses the reaction a quinone + NADH + 5 H(+)(in) = a quinol + NAD(+) + 4 H(+)(out). NDH-1 shuttles electrons from NADH, via FMN and iron-sulfur (Fe-S) centers, to quinones in the respiratory chain. The immediate electron acceptor for the enzyme in this species is believed to be a menaquinone. Couples the redox reaction to proton translocation (for every two electrons transferred, four hydrogen ions are translocated across the cytoplasmic membrane), and thus conserves the redox energy in a proton gradient. This Chlorobaculum tepidum (strain ATCC 49652 / DSM 12025 / NBRC 103806 / TLS) (Chlorobium tepidum) protein is NADH-quinone oxidoreductase subunit B.